The primary structure comprises 390 residues: uncharacterized protein (390 aa).

This sequence belongs to the glycosyltransferase group 1 family. Glycosyltransferase 4 subfamily.

This is an uncharacterized protein from Methanocaldococcus jannaschii (strain ATCC 43067 / DSM 2661 / JAL-1 / JCM 10045 / NBRC 100440) (Methanococcus jannaschii).